A 537-amino-acid polypeptide reads, in one-letter code: Lysine--tRNA ligase (537 aa).

Residues 30–38 (PSGNIHIGN) carry the 'HIGH' region motif. The 'KMSKS' region motif lies at 276–280 (AMSSS).

Belongs to the class-I aminoacyl-tRNA synthetase family.

The protein localises to the cytoplasm. The catalysed reaction is tRNA(Lys) + L-lysine + ATP = L-lysyl-tRNA(Lys) + AMP + diphosphate. The polypeptide is Lysine--tRNA ligase (Methanosarcina barkeri (strain Fusaro / DSM 804)).